The following is a 337-amino-acid chain: Probable poly [ADP-ribose] polymerase DDB_G0278045 (337 aa).

Positions 21–231 (KKWDIIYKQR…NNNKNKNKNN (211 aa)) constitute a PARP catalytic domain. Positions 218 to 242 (NNTNNNNKNKNKNNNKNNNKNIKIQ) are enriched in low complexity. The tract at residues 218–247 (NNTNNNNKNKNKNNNKNNNKNIKIQNENKN) is disordered.

The catalysed reaction is L-aspartyl-[protein] + NAD(+) = 4-O-(ADP-D-ribosyl)-L-aspartyl-[protein] + nicotinamide. It catalyses the reaction L-glutamyl-[protein] + NAD(+) = 5-O-(ADP-D-ribosyl)-L-glutamyl-[protein] + nicotinamide. It carries out the reaction NAD(+) + (ADP-D-ribosyl)n-acceptor = nicotinamide + (ADP-D-ribosyl)n+1-acceptor + H(+).. The protein is Probable poly [ADP-ribose] polymerase DDB_G0278045 of Dictyostelium discoideum (Social amoeba).